A 618-amino-acid polypeptide reads, in one-letter code: Proline--tRNA ligase (618 aa).

It belongs to the class-II aminoacyl-tRNA synthetase family. ProS type 1 subfamily. As to quaternary structure, homodimer.

The protein localises to the cytoplasm. The enzyme catalyses tRNA(Pro) + L-proline + ATP = L-prolyl-tRNA(Pro) + AMP + diphosphate. Functionally, catalyzes the attachment of proline to tRNA(Pro) in a two-step reaction: proline is first activated by ATP to form Pro-AMP and then transferred to the acceptor end of tRNA(Pro). As ProRS can inadvertently accommodate and process non-cognate amino acids such as alanine and cysteine, to avoid such errors it has two additional distinct editing activities against alanine. One activity is designated as 'pretransfer' editing and involves the tRNA(Pro)-independent hydrolysis of activated Ala-AMP. The other activity is designated 'posttransfer' editing and involves deacylation of mischarged Ala-tRNA(Pro). The misacylated Cys-tRNA(Pro) is not edited by ProRS. The protein is Proline--tRNA ligase of Streptococcus equi subsp. zooepidemicus (strain H70).